We begin with the raw amino-acid sequence, 389 residues long: (2R)-sulfolactate sulfo-lyase subunit beta (389 aa).

The protein belongs to the UxaA family. In terms of assembly, (2R)-sulfolactate sulfo-lyase is composed of a SuyA and a SuyB subunit.

Its subcellular location is the cytoplasm. It catalyses the reaction (2R)-3-sulfolactate = sulfite + pyruvate + H(+). Its function is as follows. Together with SuyA, desulfonates sulfolactate to pyruvate and sulfite. The protein is (2R)-sulfolactate sulfo-lyase subunit beta (suyB) of Chromohalobacter salexigens (strain ATCC BAA-138 / DSM 3043 / CIP 106854 / NCIMB 13768 / 1H11).